A 383-amino-acid chain; its full sequence is Succinyl-diaminopimelate desuccinylase (383 aa).

Histidine 73 is a binding site for Zn(2+). Aspartate 75 is an active-site residue. Aspartate 107 lines the Zn(2+) pocket. The active-site Proton acceptor is the glutamate 141. The Zn(2+) site is built by glutamate 142, glutamate 170, and histidine 356.

This sequence belongs to the peptidase M20A family. DapE subfamily. Homodimer. Requires Zn(2+) as cofactor. The cofactor is Co(2+).

The catalysed reaction is N-succinyl-(2S,6S)-2,6-diaminopimelate + H2O = (2S,6S)-2,6-diaminopimelate + succinate. It functions in the pathway amino-acid biosynthesis; L-lysine biosynthesis via DAP pathway; LL-2,6-diaminopimelate from (S)-tetrahydrodipicolinate (succinylase route): step 3/3. Its function is as follows. Catalyzes the hydrolysis of N-succinyl-L,L-diaminopimelic acid (SDAP), forming succinate and LL-2,6-diaminopimelate (DAP), an intermediate involved in the bacterial biosynthesis of lysine and meso-diaminopimelic acid, an essential component of bacterial cell walls. The polypeptide is Succinyl-diaminopimelate desuccinylase (Pseudomonas fluorescens (strain ATCC BAA-477 / NRRL B-23932 / Pf-5)).